The sequence spans 305 residues: MTTLSSITVSVPATTANLGPGFDCLGAAISLYNRFKFSIADSAIEVKITVTGKEAPKVSTDRNNLAYQAFVKLYEYINQTPPCVLVEIDLGVPLARGLGSSATAIVGGLLGANQLAGSPLSQTEVMNLAIAIEGHPDNVVPALLGGCRLTASTSKGWVVCDIPWHPDIVPVVAIPDFELSTTEARRVIPTEYIRSDAIFNCAHLGILLRGLETGYGEWLQAGMQDKIHQPYRKSLIKGYEYVRSAALNAGAYEMVISGAGPTLLALTNSLTSSKVIAAMTGAWENQGVVTQVQALEINTRGAVFS.

93–103 (PLARGLGSSAT) serves as a coordination point for ATP.

Belongs to the GHMP kinase family. Homoserine kinase subfamily.

It localises to the cytoplasm. It carries out the reaction L-homoserine + ATP = O-phospho-L-homoserine + ADP + H(+). The protein operates within amino-acid biosynthesis; L-threonine biosynthesis; L-threonine from L-aspartate: step 4/5. In terms of biological role, catalyzes the ATP-dependent phosphorylation of L-homoserine to L-homoserine phosphate. This Trichodesmium erythraeum (strain IMS101) protein is Homoserine kinase.